A 294-amino-acid chain; its full sequence is Protoheme IX farnesyltransferase (294 aa).

9 consecutive transmembrane segments (helical) span residues 25-45 (SLVL…MGAV), 48-68 (LVTL…NCYW), 92-112 (AVAL…LALG), 115-135 (VLTA…YTPL), 141-161 (AAML…WTAV), 170-190 (FSLF…IALF), 216-236 (VVLY…LHIA), 240-260 (YLAA…WGFF), and 272-292 (FFFS…DRVP).

It belongs to the UbiA prenyltransferase family. Protoheme IX farnesyltransferase subfamily.

Its subcellular location is the cell inner membrane. It carries out the reaction heme b + (2E,6E)-farnesyl diphosphate + H2O = Fe(II)-heme o + diphosphate. Its pathway is porphyrin-containing compound metabolism; heme O biosynthesis; heme O from protoheme: step 1/1. Its function is as follows. Converts heme B (protoheme IX) to heme O by substitution of the vinyl group on carbon 2 of heme B porphyrin ring with a hydroxyethyl farnesyl side group. The chain is Protoheme IX farnesyltransferase from Myxococcus xanthus (strain DK1622).